Reading from the N-terminus, the 487-residue chain is Glutamyl-tRNA(Gln) amidotransferase subunit A (487 aa).

Residues K79 and S158 each act as charge relay system in the active site. The active-site Acyl-ester intermediate is the S182.

This sequence belongs to the amidase family. GatA subfamily. As to quaternary structure, heterotrimer of A, B and C subunits.

The catalysed reaction is L-glutamyl-tRNA(Gln) + L-glutamine + ATP + H2O = L-glutaminyl-tRNA(Gln) + L-glutamate + ADP + phosphate + H(+). Its function is as follows. Allows the formation of correctly charged Gln-tRNA(Gln) through the transamidation of misacylated Glu-tRNA(Gln) in organisms which lack glutaminyl-tRNA synthetase. The reaction takes place in the presence of glutamine and ATP through an activated gamma-phospho-Glu-tRNA(Gln). This Ehrlichia canis (strain Jake) protein is Glutamyl-tRNA(Gln) amidotransferase subunit A.